Consider the following 518-residue polypeptide: Phenylacetate 2-hydroxylase (518 aa).

Position 437 (Cys-437) interacts with heme.

It belongs to the cytochrome P450 family.

It catalyses the reaction 2-phenylacetate + reduced [NADPH--hemoprotein reductase] + O2 = (2-hydroxyphenyl)acetate + oxidized [NADPH--hemoprotein reductase] + H2O + H(+). The protein operates within aromatic compound metabolism; phenylacetate degradation. Its function is as follows. Catalyzes the hydroxylation of phenylacetate to 2-hydroxyphenylacetate in the homogentisate pathway. The homogentisate pathway is used to catabolize phenylacetate and use it as a carbon source. Can also catalyze the hydroxylation of 3-hydroxyphenylacetate to 2,5-dihydroxyphenylacetate (homogentisate) at low efficiency. This Emericella nidulans (Aspergillus nidulans) protein is Phenylacetate 2-hydroxylase (phacA).